We begin with the raw amino-acid sequence, 507 residues long: Protein MosB (507 aa).

The H-T-H motif DNA-binding region spans 256–275 (QAHGALYKGQHVGLLSDIGC). K282 bears the N6-(pyridoxal phosphate)lysine mark.

The protein belongs to the DegT/DnrJ/EryC1 family.

Its function is as follows. Involved in the biosynthesis of the rhizopine 3-O-methyl-scyllo-inosamine. May have a regulatory role in controlling the housekeeping genes within the nodule which are involved in the biosynthesis of the rhizopine backbone. This is Protein MosB (mosB) from Rhizobium meliloti (Ensifer meliloti).